A 500-amino-acid chain; its full sequence is Metacaspase-5 (500 aa).

The N-terminal stretch at 1–18 (MDAALALLFGQVATAVLP) is a signal peptide. Positions 19–63 (YVVNSIGRVPRPKRVDVKKAMGEAHQCRPVVPYRAPRPYTEGRVK) are important for catalytic activity. N70 and N113 each carry an N-linked (GlcNAc...) asparagine glycan. Residue H147 is part of the active site. Ca(2+) is bound by residues D162, D178, and D179. Residue C202 is part of the active site. D209 serves as a coordination point for Ca(2+). N219, N235, N258, N264, N283, and N332 each carry an N-linked (GlcNAc...) asparagine glycan. Disordered regions lie at residues 358 to 419 (EATL…QAYY) and 444 to 500 (QPPQ…PGRK). The segment covering 379–389 (ASTSNGKSNPG) has biased composition (polar residues). A compositionally biased stretch (low complexity) spans 444 to 461 (QPPQQAYYQPPQQAYYQP).

Belongs to the peptidase C14B family.

The protein resides in the recycling endosome. Functionally, cysteine protease that cleaves specifically after arginine or lysine residues. In Trypanosoma brucei brucei, this protein is Metacaspase-5.